We begin with the raw amino-acid sequence, 426 residues long: MKHLTEMVRQHKAGKTNGIYAVCSAHPLVLEAAIRYASANQTPLLIEATSNQVDQFGGYTGMTPADFRGFVCQLADSLNFPQDALILGGDHLGPNRWQNLPAAQAMANADDLIKSYVAAGFKKIHLDCSMSCQDDPIPLTDDIVAERAARLAKVAEETCLEHFGEADLEYVIGTEVPVPGGAHETLSELAVTTPDAARATLEAHRHAFEKQGLNAIWPRIIALVVQPGVEFDHTNVIDYQPAKATALSQMVESYETLIFEAHSTDYQTPQSLRQLVIDHFAILKVGPALTFALREALFSLAAIEEELVPAKACSGLRQVLENVMLNRPEYWQSHYHGDGNARRLARGYSYSDRVRYYWPDSQIDDAFAHLVRNLADSPIPLPLISQYLPLQYVKVRSGELQPTPRELIINHIQDILAQYHTACEGQ.

The protein belongs to the GatZ/KbaZ family. KbaZ subfamily. In terms of assembly, forms a complex with KbaY.

The protein operates within carbohydrate metabolism; D-tagatose 6-phosphate degradation; D-glyceraldehyde 3-phosphate and glycerone phosphate from D-tagatose 6-phosphate: step 2/2. In terms of biological role, component of the tagatose-1,6-bisphosphate aldolase KbaYZ that is required for full activity and stability of the Y subunit. Could have a chaperone-like function for the proper and stable folding of KbaY. When expressed alone, KbaZ does not show any aldolase activity. This is D-tagatose-1,6-bisphosphate aldolase subunit KbaZ from Escherichia coli O157:H7.